The chain runs to 399 residues: Probable aspartate/prephenate aminotransferase (399 aa).

L-aspartate-binding residues include Gly39, Trp125, and Asn175. An N6-(pyridoxal phosphate)lysine modification is found at Lys239. Arg375 is a binding site for L-aspartate.

It belongs to the class-I pyridoxal-phosphate-dependent aminotransferase family. Homodimer. The cofactor is pyridoxal 5'-phosphate.

It localises to the cytoplasm. The catalysed reaction is L-aspartate + 2-oxoglutarate = oxaloacetate + L-glutamate. It catalyses the reaction L-arogenate + 2-oxoglutarate = prephenate + L-glutamate. Its function is as follows. Catalyzes the reversible conversion of aspartate and 2-oxoglutarate to glutamate and oxaloacetate. Can also transaminate prephenate in the presence of glutamate. The sequence is that of Probable aspartate/prephenate aminotransferase (aatA) from Rickettsia prowazekii (strain Madrid E).